The following is a 108-amino-acid chain: UPF0060 membrane protein RER_49640 (108 aa).

A run of 4 helical transmembrane segments spans residues 8 to 28 (LLFV…WQGI), 33 to 53 (GWIW…VATM), 62 to 82 (ILAA…VVMD), and 87 to 107 (DRFD…IMYA).

Belongs to the UPF0060 family.

It is found in the cell membrane. The protein is UPF0060 membrane protein RER_49640 of Rhodococcus erythropolis (strain PR4 / NBRC 100887).